Here is a 525-residue protein sequence, read N- to C-terminus: GMP synthase [glutamine-hydrolyzing] (525 aa).

Positions 9-207 constitute a Glutamine amidotransferase type-1 domain; that stretch reads RILILDFGSQ…VLDICGCAAL (199 aa). Residue cysteine 86 is the Nucleophile of the active site. Residues histidine 181 and glutamate 183 contribute to the active site. The GMPS ATP-PPase domain occupies 208–400; that stretch reads WTPSNIVDDA…LGLPYDMVYR (193 aa). Residue 235 to 241 coordinates ATP; that stretch reads SGGVDSS.

In terms of assembly, homodimer.

The enzyme catalyses XMP + L-glutamine + ATP + H2O = GMP + L-glutamate + AMP + diphosphate + 2 H(+). Its pathway is purine metabolism; GMP biosynthesis; GMP from XMP (L-Gln route): step 1/1. Catalyzes the synthesis of GMP from XMP. The polypeptide is GMP synthase [glutamine-hydrolyzing] (Pseudomonas aeruginosa (strain UCBPP-PA14)).